Reading from the N-terminus, the 70-residue chain is Conotoxin AbVIB (70 aa).

A signal peptide spans 1–17 (VIIIAVLFLTACQLTTA). The propeptide occupies 18–41 (ETSSRGKQKHRALRSTDKNSKLTR). A disordered region spans residues 20–41 (SSRGKQKHRALRSTDKNSKLTR). 3 cysteine pairs are disulfide-bonded: Cys43–Cys57, Cys50–Cys61, and Cys56–Cys68.

It belongs to the conotoxin O1 superfamily. As to expression, expressed by the venom duct.

Its subcellular location is the secreted. The sequence is that of Conotoxin AbVIB from Conus abbreviatus (Abbreviated cone).